The chain runs to 147 residues: 3-dehydroquinate dehydratase (147 aa).

The active-site Proton acceptor is the Tyr-24. 3 residues coordinate substrate: Asn-75, His-81, and Asp-88. His-101 functions as the Proton donor in the catalytic mechanism. Residues Ile-102–Ser-103 and Arg-112 contribute to the substrate site.

This sequence belongs to the type-II 3-dehydroquinase family. Homododecamer.

The enzyme catalyses 3-dehydroquinate = 3-dehydroshikimate + H2O. The protein operates within metabolic intermediate biosynthesis; chorismate biosynthesis; chorismate from D-erythrose 4-phosphate and phosphoenolpyruvate: step 3/7. Catalyzes a trans-dehydration via an enolate intermediate. The polypeptide is 3-dehydroquinate dehydratase (Cereibacter sphaeroides (strain ATCC 17023 / DSM 158 / JCM 6121 / CCUG 31486 / LMG 2827 / NBRC 12203 / NCIMB 8253 / ATH 2.4.1.) (Rhodobacter sphaeroides)).